Here is a 349-residue protein sequence, read N- to C-terminus: tRNA pseudouridine synthase D (349 aa).

F27 is a substrate binding site. D80 functions as the Nucleophile in the catalytic mechanism. N129 contributes to the substrate binding site. The TRUD domain occupies G155–L303. Position 329 (F329) interacts with substrate.

The protein belongs to the pseudouridine synthase TruD family.

It carries out the reaction uridine(13) in tRNA = pseudouridine(13) in tRNA. Its function is as follows. Responsible for synthesis of pseudouridine from uracil-13 in transfer RNAs. The polypeptide is tRNA pseudouridine synthase D (Escherichia coli (strain SE11)).